Reading from the N-terminus, the 102-residue chain is Circadian clock oscillator protein KaiB (102 aa).

This sequence belongs to the KaiB family. As to quaternary structure, undergoes a major conformational rearrangment; in the free state forms homotetramers with 2 dimers. When bound to the CI domain of KaiC switches to a monomeric thioredoxin-fold (KaiB(fs)). Monomers, homodimers and homotetramers are detected in solution; at low concentrations only monomers are seen. In vitro forms KaiC(6):KaiB(1) and KaiC(6):KaiB(6) complexes. Only associates with 'Ser-431'-phosphorylated KaiC (and not with doubly phosphorylated KaiC). Complex formation between KaiB and KaiC is regulated by the phosphorylation state of KaiC and by an ATP hydrolysis-driven conformation change in the CI ring of KaiC; complex formation is slow. Slow complex formation is crucial for the timing of the circadian period. In low resolution cryo-EM forms a KaiC(6):KaiB(6) complex. The KaiABC complex composition changes during the circadian cycle to control KaiC phosphorylation. Complexes KaiC(6), KaiA(2-4):KaiC(6), KaiB(6):KaiC(6) and KaiC(6):KaiB(6):KaiA(12) are among the most important forms, many form cooperatively. The KaiB:KaiC complex is more prevalent at 16 hours (in the dark) than at 4 hours (in the light) in the circadian cycle. The KaiA:KaiB complex is only found at 20-24 hours in the circadian cycle (subjective night). Binds to the CI domain of KaiC; SasA and KaiB compete to bind to the CI domain.

Its subcellular location is the cytoplasm. It is found in the cell membrane. Its function is as follows. Key component of the KaiABC oscillator complex, which constitutes the main circadian regulator in cyanobacteria. Complex composition changes during the circadian cycle to control KaiC phosphorylation. KaiA stimulates KaiC autophosphorylation, while KaiB sequesters KaiA, leading to KaiC autodephosphorylation. KaiA binding to the KaiC CII domain yields KaiA(2-4):KaiC(6) complexes which stimulate KaiC autophosphorylation. Phospho-Ser-431 KaiC accumulation triggers binding of KaiB to form the KaiB(6):KaiC(6) complex, leading to changes in the output regulators CikA and SasA. KaiB switches to a thioredoxin-like fold (KaiB(fs)) in complex with KaiC. KaiB(6):KaiC(6) formation exposes a site for KaiA binding that sequesters KaiA from the CII domain, making the KaiC(6):KaiB(6):KaiA(12) complex that results in KaiC autodephosphorylation. Complete dephosphorylation of KaiC leads to dissociation of KaiA(2):KaiB(1), completing 1 cycle of the Kai oscillator. Functionally, circadian oscillations can be generated in vitro by incubating KaiA, KaiB and KaiC with 1 mM ATP. The cycle is self-sustainable for at least 3 cycles and resistant to temperature changes. A very robust clock is reconstituted with KaiA, KaiB, KaiC, SasA, CikA and RpaA; output is measured by transcription from an appropriate reporter. In terms of biological role, a metamorphic protein which reversibly switches between an inactive tetrameric fold and a rare, thioredoxin-like monomeric fold (KaiB(fs)). KaiB(fs) binds phospho-KaiC, KaiA and CikA. KaiA and CikA compete for binding to KaiB(fs), and KaiB(fs) and SasA compete for binding to KaiC, thus the clock oscillator and output signal pathway are tightly coupled. The chain is Circadian clock oscillator protein KaiB from Synechococcus elongatus (strain ATCC 33912 / PCC 7942 / FACHB-805) (Anacystis nidulans R2).